Consider the following 480-residue polypeptide: uncharacterized protein (480 aa).

A helical transmembrane segment spans residues 7-28 (HVISIFETFGAYFINIFYNFLY). N73 and N195 each carry an N-linked (GlcNAc...) asparagine; by host glycan. Residues 195 to 235 (NRSLLYQIEELTSEKKSLLAELSTLRKKYEKRQSEYRRLVQ) adopt a coiled-coil conformation. A disordered region spans residues 297 to 332 (ELTSKSPSNYPVPQSRTIVSKPSDNYPVPQSRSSKI). Residues 301-329 (KSPSNYPVPQSRTIVSKPSDNYPVPQSRS) are compositionally biased toward polar residues. N455 carries an N-linked (GlcNAc...) asparagine; by host glycan.

It belongs to the asfivirus B475L family.

It is found in the host membrane. This is an uncharacterized protein from African swine fever virus (isolate Pig/Kenya/KEN-50/1950) (ASFV).